The chain runs to 1147 residues: MAISSSSCLGLICSLLCHWVGTASSLNLEDPNVCSHWESYSVTVQESYPHPFDQIYYTSCTDILNWFKCTRHRISYRTAYRHGEKTMYRRKSQCCPGFYESRDMCVPHCADKCVHGRCIAPNTCQCEPGWGGTNCSSACDGDHWGPHCSSRCQCKNRALCNPITGACHCAAGYRGWRCEDRCEQGTYGNDCHQRCQCQNGATCDHITGECRCSPGYTGAFCEDLCPPGKHGPHCEQRCPCQNGGVCHHVTGECSCPSGWMGTVCGQPCPEGRFGKNCSQECQCHNGGTCDAATGQCHCSPGYTGERCQDECPVGSYGVRCAEACRCVNGGKCYHVSGTCLCEAGFSGELCEARLCPEGLYGIKCDKRCPCHLDNTHSCHPMSGECGCKPGWSGLYCNETCSPGFYGEACQQICSCQNGADCDSVTGRCACAPGFKGTDCSTPCPLGRYGINCSSRCGCKNDAVCSPVDGSCICKAGWHGVDCSIRCPSGTWGFGCNLTCQCLNGGACNTLDGTCTCAPGWRGAKCEFPCQDGTYGLNCAERCDCSHADGCHPTTGHCRCLPGWSGVHCDSVCAEGRWGPNCSLPCYCKNGASCSPDDGICECAPGFRGTTCQRICSPGFYGHRCSQTCPQCVHSSGPCHHITGLCDCLPGFTGALCNEVCPSGRFGKNCAGVCTCTNNGTCNPIDRSCQCYPGWIGSDCSQPCPPAHWGPNCIHTCNCHNGAFCSAYDGECKCTPGWTGLYCTQRCPLGFYGKDCALICQCQNGADCDHISGQCTCRTGFMGRHCEQKCPAGTYGYGCRQICDCLNNSTCDHITGTCYCSPGWKGARCDQAGVIIVGNLNSLSRTSTALPADSYQIGAIAGIVVLVLVVLFLLALFIIYRHKQKRKESSMPAVTYTPAMRVINADYTIAETLPHSNGGNANSHYFTNPSYHTLSQCATSPHVNNRDRMTIAKSKNNQLFVNLKNVNPGKRGTLVDCTGTLPADWKQGGYLNELGAFGLDRSYMGKSLKDLGKNSEYNSSTCSLSSSENPYATIKDPPALLPKSSECGYVEMKSPARRDSPYAEINNSTPANRNVYEVEPTVSVVQGVFSNSGHVTQDPYDLPKNSHIPCHYDLLPVRDSSSSPKREDGGGSNSTSSNSTSSSSSSSE.

The N-terminal stretch at 1-25 (MAISSSSCLGLICSLLCHWVGTASS) is a signal peptide. Residues 1–857 (MAISSSSCLG…ALPADSYQIG (857 aa)) form a necessary for interaction with AP2M1, self-assembly and formation of the irregular, mosaic-like adhesion pattern region. Topologically, residues 26 to 857 (LNLEDPNVCS…ALPADSYQIG (832 aa)) are extracellular. The EMI domain maps to 30 to 107 (DPNVCSHWES…FYESRDMCVP (78 aa)). 47 cysteine pairs are disulfide-bonded: C34–C95, C60–C69, C94–C105, C109–C124, C126–C135, C148–C160, C154–C167, C169–C178, C191–C203, C197–C210, C212–C221, C234–C246, C240–C253, C255–C264, C281–C289, C283–C296, C298–C307, C320–C332, C326–C339, C341–C350, C409–C421, C415–C428, C430–C439, C456–C464, C458–C471, C473–C482, C495–C507, C501–C514, C516–C525, C542–C550, C544–C557, C559–C568, C581–C593, C587–C600, C602–C611, C669–C681, C675–C688, C690–C699, C716–C724, C718–C731, C733–C742, C755–C767, C761–C774, C776–C785, C802–C810, C804–C817, and C819–C828. 15 EGF-like domains span residues 101 to 136 (SRDM…TNCS), 144 to 179 (WGPH…WRCE), 187 to 222 (YGND…AFCE), 230 to 265 (HGPH…TVCG), 278 to 308 (SQEC…ERCQ), 316 to 351 (YGVR…ELCE), 405 to 440 (YGEA…TDCS), 453 to 483 (SSRC…VDCS), 491 to 526 (WGFG…AKCE), 539 to 569 (AERC…VHCD), 577 to 612 (WGPN…TTCQ), 665 to 700 (FGKN…SDCS), 713 to 743 (IHTC…LYCT), 751 to 786 (YGKD…RHCE), and 799 to 829 (RQIC…ARCD). N-linked (GlcNAc...) asparagine glycosylation is present at N134. Residue N496 is glycosylated (N-linked (GlcNAc...) asparagine). A helical membrane pass occupies residues 858 to 878 (AIAGIVVLVLVVLFLLALFII). Topologically, residues 879–1147 (YRHKQKRKES…STSSSSSSSE (269 aa)) are cytoplasmic. Positions 945-1147 (RDRMTIAKSK…STSSSSSSSE (203 aa)) are necessary for formation of large intracellular vacuoles. Y1030 is subject to Phosphotyrosine. Residues 1093-1147 (HVTQDPYDLPKNSHIPCHYDLLPVRDSSSSPKREDGGGSNSTSSNSTSSSSSSSE) are disordered. The segment covering 1132-1147 (NSTSSNSTSSSSSSSE) has biased composition (low complexity).

The protein belongs to the MEGF family. As to quaternary structure, homomer. Interacts with GULP1 and ABCA1. Interacts with AP2M1. Does not interact with MEGF11. Binds with high affinity to complement C1q. Interacts (via the cytoplasmic domain) with NOTCH1 (via NICD domain). In terms of processing, ubiquitinated; mono- and polyubiquitinated forms are detected. Post-translationally, phosphorylated on tyrosine residues. Phosphorylation at Tyr-1030 may be important for muscle cell proliferation. In terms of tissue distribution, expressed in cerebellum (at protein level). Expressed in kidney, stellate cells of the cerebellum and macrophage cell lines.

It is found in the cell membrane. Its subcellular location is the cell projection. It localises to the phagocytic cup. Functionally, membrane receptor involved in phagocytosis by macrophages and astrocytes of apoptotic cells. Receptor for C1q, an eat-me signal, that binds phosphatidylserine expressed on the surface of apoptotic cells. Cooperates with ABCA1 within the process of engulfment. Promotes the formation of large intracellular vacuoles and may be responsible for the uptake of amyloid-beta peptides. Necessary for astrocyte-dependent apoptotic neuron clearance in the developing cerebellum. Plays a role in muscle cell proliferation, adhesion and motility. Is also an essential factor in the regulation of myogenesis. Controls the balance between skeletal muscle satellite cells proliferation and differentiation through regulation of the notch signaling pathway. May also function in the mosaic spacing of specific neuron subtypes in the retina through homotypic retinal neuron repulsion. Mosaics provide a mechanism to distribute each cell type evenly across the retina, ensuring that all parts of the visual field have access to a full set of processing elements. The chain is Multiple epidermal growth factor-like domains protein 10 from Mus musculus (Mouse).